A 501-amino-acid polypeptide reads, in one-letter code: Putative zinc metalloprotease TM_0890 (501 aa).

H17 provides a ligand contact to Zn(2+). E18 is a catalytic residue. Zn(2+) is bound at residue H21. Helical transmembrane passes span 93–115 (FLIT…LPIT), 401–420 (VQTG…SAAS), 427–449 (VLTV…LPAL), and 474–496 (IIHF…LDIG). Residues 96–180 (TLAGPLFSIL…LVIIRNGEKK (85 aa)) enclose the PDZ domain.

Belongs to the peptidase M50B family. Requires Zn(2+) as cofactor.

It is found in the cell inner membrane. The chain is Putative zinc metalloprotease TM_0890 from Thermotoga maritima (strain ATCC 43589 / DSM 3109 / JCM 10099 / NBRC 100826 / MSB8).